We begin with the raw amino-acid sequence, 113 residues long: Hydrogenase maturation factor HypA (113 aa).

Residue His2 coordinates Ni(2+). Zn(2+) is bound by residues Cys73, Cys76, Cys89, and Cys92.

It belongs to the HypA/HybF family.

Involved in the maturation of [NiFe] hydrogenases. Required for nickel insertion into the metal center of the hydrogenase. This is Hydrogenase maturation factor HypA from Albidiferax ferrireducens (strain ATCC BAA-621 / DSM 15236 / T118) (Rhodoferax ferrireducens).